A 177-amino-acid polypeptide reads, in one-letter code: Large ribosomal subunit protein uL6 (177 aa).

It belongs to the universal ribosomal protein uL6 family. Part of the 50S ribosomal subunit.

Its function is as follows. This protein binds to the 23S rRNA, and is important in its secondary structure. It is located near the subunit interface in the base of the L7/L12 stalk, and near the tRNA binding site of the peptidyltransferase center. The protein is Large ribosomal subunit protein uL6 of Enterobacter sp. (strain 638).